Consider the following 922-residue polypeptide: Phosphoenolpyruvate carboxylase (922 aa).

The segment at 1–20 (MTKTLHARPSAATDTTFAPP) is disordered. Residues histidine 142 and lysine 581 contribute to the active site.

Belongs to the PEPCase type 1 family. The cofactor is Mg(2+).

It catalyses the reaction oxaloacetate + phosphate = phosphoenolpyruvate + hydrogencarbonate. Functionally, forms oxaloacetate, a four-carbon dicarboxylic acid source for the tricarboxylic acid cycle. The chain is Phosphoenolpyruvate carboxylase (ppc) from Methylorubrum extorquens (strain ATCC 14718 / DSM 1338 / JCM 2805 / NCIMB 9133 / AM1) (Methylobacterium extorquens).